The chain runs to 329 residues: GTP 3',8-cyclase (329 aa).

The Radical SAM core domain occupies 8-234; the sequence is AFARKFYYLR…QLRQRSDGPA (227 aa). GTP is bound at residue arginine 17. [4Fe-4S] cluster-binding residues include cysteine 24 and cysteine 28. S-adenosyl-L-methionine is bound at residue tyrosine 30. Cysteine 31 is a binding site for [4Fe-4S] cluster. Arginine 68 contributes to the GTP binding site. Position 72 (glycine 72) interacts with S-adenosyl-L-methionine. Threonine 99 is a GTP binding site. Serine 123 provides a ligand contact to S-adenosyl-L-methionine. Lysine 160 provides a ligand contact to GTP. Methionine 194 serves as a coordination point for S-adenosyl-L-methionine. 2 residues coordinate [4Fe-4S] cluster: cysteine 257 and cysteine 260. 262–264 is a binding site for GTP; it reads RLR. Cysteine 274 contacts [4Fe-4S] cluster.

It belongs to the radical SAM superfamily. MoaA family. Monomer and homodimer. [4Fe-4S] cluster is required as a cofactor.

The enzyme catalyses GTP + AH2 + S-adenosyl-L-methionine = (8S)-3',8-cyclo-7,8-dihydroguanosine 5'-triphosphate + 5'-deoxyadenosine + L-methionine + A + H(+). It functions in the pathway cofactor biosynthesis; molybdopterin biosynthesis. In terms of biological role, catalyzes the cyclization of GTP to (8S)-3',8-cyclo-7,8-dihydroguanosine 5'-triphosphate. The sequence is that of GTP 3',8-cyclase from Escherichia coli O139:H28 (strain E24377A / ETEC).